A 931-amino-acid polypeptide reads, in one-letter code: Short transient receptor potential channel 6 (931 aa).

Over residues 1–23 (MSQSPAFGPRRGSSPRGAAGAAA) the composition is skewed to low complexity. The interval 1–26 (MSQSPAFGPRRGSSPRGAAGAAARRN) is disordered. Residues 1-438 (MSQSPAFGPR…CSKMGKIMRG (438 aa)) lie on the Cytoplasmic side of the membrane. ANK repeat units lie at residues 97 to 126 (IEEE…SLNV), 132 to 161 (MGQN…LSRV), 163 to 189 (DALL…FAEG), and 218 to 247 (HDVT…RIER). A helical membrane pass occupies residues 439-459 (PFMKFVAHAASFTIFLGLLVM). The Extracellular portion of the chain corresponds to 460-487 (NAADRFEGTKLLPNETSTDNAKQLFRMK). N-linked (GlcNAc...) asparagine glycosylation is present at Asn-473. The chain crosses the membrane as a helical span at residues 488 to 508 (TSCFSWMEMLIISWVIGMIWA). At 509 to 521 (ECKEIWTQGPKEY) the chain is on the cytoplasmic side. A helical transmembrane segment spans residues 522–542 (LFELWNMLDFGMLAIFAASFI). Topologically, residues 543–592 (ARFMAFWHASKAQSIIDANDTLKDLTKVTLGDNVKYYNLARIKWDPSDPQ) are extracellular. Asn-561 carries an N-linked (GlcNAc...) asparagine glycan. A helical membrane pass occupies residues 593–613 (IISEGLYAIAVVLSFSRIAYI). Residues 614–636 (LPANESFGPLQISLGRTVKDIFK) lie on the Cytoplasmic side of the membrane. A helical transmembrane segment spans residues 637 to 657 (FMVIFIMVFVAFMIGMFNLYS). Residues 658 to 706 (YYIGAKQNEAFTTVEESFKTLFWAIFGLSEVKSVVINYNHKFIENIGYV) are Extracellular-facing. Residues 707-727 (LYGVYNVTMVIVLLNMLIAMI) form a helical membrane-spanning segment. Topologically, residues 728–931 (NSSFQEIEDD…MEPNQEETNR (204 aa)) are cytoplasmic. The residue at position 815 (Ser-815) is a Phosphoserine.

Belongs to the transient receptor (TC 1.A.4) family. STrpC subfamily. TRPC6 sub-subfamily. Homodimer; forms channel complex. Interacts with MX1 and RNF24. Phosphorylated by FYN, leading to an increase of TRPC6 channel activity. In terms of tissue distribution, expressed primarily in placenta, lung, spleen, ovary and small intestine. Expressed in podocytes and is a component of the glomerular slit diaphragm.

The protein resides in the cell membrane. It catalyses the reaction Ca(2+)(in) = Ca(2+)(out). Its activity is regulated as follows. Activated by diacylglycerol (DAG) in a membrane-delimited fashion, independently of protein kinase C. Functionally, forms a receptor-activated non-selective calcium permeant cation channel. Probably is operated by a phosphatidylinositol second messenger system activated by receptor tyrosine kinases or G-protein coupled receptors. Activated by diacylglycerol (DAG) in a membrane-delimited fashion, independently of protein kinase C. Seems not to be activated by intracellular calcium store depletion. This chain is Short transient receptor potential channel 6, found in Homo sapiens (Human).